Consider the following 396-residue polypeptide: L-tyrosine/L-aspartate decarboxylase (396 aa).

N6-(pyridoxal phosphate)lysine is present on lysine 245.

This sequence belongs to the group II decarboxylase family. MfnA subfamily. In terms of assembly, homodimer. Pyridoxal 5'-phosphate is required as a cofactor.

The catalysed reaction is L-tyrosine + H(+) = tyramine + CO2. It catalyses the reaction L-aspartate + H(+) = beta-alanine + CO2. It participates in cofactor biosynthesis; methanofuran biosynthesis. The protein operates within cofactor biosynthesis; coenzyme A biosynthesis. Its activity is regulated as follows. Inhibited by hydroxylamine and O-methylhydroxylamine. Its function is as follows. Catalyzes the decarboxylation of L-tyrosine to produce tyramine for methanofuran biosynthesis. Can also catalyze the decarboxylation of L-aspartate to produce beta-alanine for coenzyme A (CoA) biosynthesis. The polypeptide is L-tyrosine/L-aspartate decarboxylase (Methanocaldococcus jannaschii (strain ATCC 43067 / DSM 2661 / JAL-1 / JCM 10045 / NBRC 100440) (Methanococcus jannaschii)).